The following is a 507-amino-acid chain: GMP synthase [glutamine-hydrolyzing] (507 aa).

Residues 4–193 enclose the Glutamine amidotransferase type-1 domain; sequence KIIILDFGSQ…VVDVCGCKQD (190 aa). Catalysis depends on Cys-79, which acts as the Nucleophile. Active-site residues include His-167 and Glu-169. Residues 194-382 enclose the GMPS ATP-PPase domain; the sequence is WSPASFIEST…LGMPEHLITR (189 aa). 221–227 is an ATP binding site; it reads SGGVDSS.

As to quaternary structure, homodimer.

The enzyme catalyses XMP + L-glutamine + ATP + H2O = GMP + L-glutamate + AMP + diphosphate + 2 H(+). It participates in purine metabolism; GMP biosynthesis; GMP from XMP (L-Gln route): step 1/1. Functionally, catalyzes the synthesis of GMP from XMP. The chain is GMP synthase [glutamine-hydrolyzing] from Bacteroides fragilis (strain ATCC 25285 / DSM 2151 / CCUG 4856 / JCM 11019 / LMG 10263 / NCTC 9343 / Onslow / VPI 2553 / EN-2).